The chain runs to 149 residues: MHCPFCSENDTKVIDSRLVADGHQVRRRRQCLACSERFTTFESAELVMPKVIKSNGNREPFNEDKMVGGVQRALEKRPVSADAIELAISTIKSQLRATGEREVPSEMIGNLVMGQLKELDKVAYIRFASVYRSFEDIREFGEEIAKLED.

A zinc finger spans residues 3-34 (CPFCSENDTKVIDSRLVADGHQVRRRRQCLAC). One can recognise an ATP-cone domain in the interval 49–139 (PKVIKSNGNR…VYRSFEDIRE (91 aa)).

This sequence belongs to the NrdR family. Zn(2+) serves as cofactor.

Its function is as follows. Negatively regulates transcription of bacterial ribonucleotide reductase nrd genes and operons by binding to NrdR-boxes. The chain is Transcriptional repressor NrdR from Vibrio atlanticus (strain LGP32) (Vibrio splendidus (strain Mel32)).